A 91-amino-acid chain; its full sequence is Sec-independent protein translocase protein TatA (91 aa).

A helical transmembrane segment spans residues 1–21 (MGAMQPMHWLIVAVVVVILFG).

Belongs to the TatA/E family. In terms of assembly, the Tat system comprises two distinct complexes: a TatABC complex, containing multiple copies of TatA, TatB and TatC subunits, and a separate TatA complex, containing only TatA subunits. Substrates initially bind to the TatABC complex, which probably triggers association of the separate TatA complex to form the active translocon.

The protein resides in the cell membrane. Its function is as follows. Part of the twin-arginine translocation (Tat) system that transports large folded proteins containing a characteristic twin-arginine motif in their signal peptide across membranes. TatA could form the protein-conducting channel of the Tat system. The chain is Sec-independent protein translocase protein TatA from Rhodococcus erythropolis (strain PR4 / NBRC 100887).